The chain runs to 101 residues: Integration host factor subunit alpha (101 aa).

It belongs to the bacterial histone-like protein family. Heterodimer of an alpha and a beta chain.

Its function is as follows. This protein is one of the two subunits of integration host factor, a specific DNA-binding protein that functions in genetic recombination as well as in transcriptional and translational control. In Alkalilimnicola ehrlichii (strain ATCC BAA-1101 / DSM 17681 / MLHE-1), this protein is Integration host factor subunit alpha.